The primary structure comprises 248 residues: tRNA pseudouridine synthase A (248 aa).

The Nucleophile role is filled by Asp-53. Position 111 (Tyr-111) interacts with substrate.

The protein belongs to the tRNA pseudouridine synthase TruA family. As to quaternary structure, homodimer.

The catalysed reaction is uridine(38/39/40) in tRNA = pseudouridine(38/39/40) in tRNA. Its function is as follows. Formation of pseudouridine at positions 38, 39 and 40 in the anticodon stem and loop of transfer RNAs. This Streptococcus thermophilus (strain ATCC BAA-491 / LMD-9) protein is tRNA pseudouridine synthase A.